Here is a 172-residue protein sequence, read N- to C-terminus: 3-phenylpropionate/cinnamic acid dioxygenase subunit beta (172 aa).

It belongs to the bacterial ring-hydroxylating dioxygenase beta subunit family. This dioxygenase system consists of four proteins: the two subunits of the hydroxylase component (HcaE and HcaF), a ferredoxin (HcaC) and a ferredoxin reductase (HcaD).

It carries out the reaction 3-phenylpropanoate + NADH + O2 + H(+) = 3-(cis-5,6-dihydroxycyclohexa-1,3-dien-1-yl)propanoate + NAD(+). It catalyses the reaction (E)-cinnamate + NADH + O2 + H(+) = (2E)-3-(cis-5,6-dihydroxycyclohexa-1,3-dien-1-yl)prop-2-enoate + NAD(+). The protein operates within aromatic compound metabolism; 3-phenylpropanoate degradation. In terms of biological role, part of the multicomponent 3-phenylpropionate dioxygenase. Converts 3-phenylpropionic acid (PP) and cinnamic acid (CI) into 3-phenylpropionate-dihydrodiol (PP-dihydrodiol) and cinnamic acid-dihydrodiol (CI-dihydrodiol), respectively. The sequence is that of 3-phenylpropionate/cinnamic acid dioxygenase subunit beta from Shigella flexneri serotype 5b (strain 8401).